The following is a 276-amino-acid chain: Diaminopimelate epimerase (276 aa).

Asparagine 13, glutamine 46, and asparagine 66 together coordinate substrate. The active-site Proton donor is the cysteine 75. Residues 76 to 77 (GN), asparagine 159, asparagine 192, and 210 to 211 (ER) each bind substrate. The active-site Proton acceptor is the cysteine 219. 220-221 (GT) serves as a coordination point for substrate.

The protein belongs to the diaminopimelate epimerase family. In terms of assembly, homodimer.

It is found in the cytoplasm. It catalyses the reaction (2S,6S)-2,6-diaminopimelate = meso-2,6-diaminopimelate. It participates in amino-acid biosynthesis; L-lysine biosynthesis via DAP pathway; DL-2,6-diaminopimelate from LL-2,6-diaminopimelate: step 1/1. Functionally, catalyzes the stereoinversion of LL-2,6-diaminopimelate (L,L-DAP) to meso-diaminopimelate (meso-DAP), a precursor of L-lysine and an essential component of the bacterial peptidoglycan. This is Diaminopimelate epimerase from Chromobacterium violaceum (strain ATCC 12472 / DSM 30191 / JCM 1249 / CCUG 213 / NBRC 12614 / NCIMB 9131 / NCTC 9757 / MK).